An 82-amino-acid chain; its full sequence is Defensin-like protein 156 (82 aa).

The signal sequence occupies residues 1–27; the sequence is MAKISCSYFLVLMLVFSVFSLVEKTKG. 4 disulfide bridges follow: Cys-31–Cys-77, Cys-41–Cys-60, Cys-46–Cys-71, and Cys-50–Cys-73.

Belongs to the DEFL family. As to expression, expressed in flower buds, but not in stems, roots or rosette leaves.

The protein localises to the secreted. The sequence is that of Defensin-like protein 156 (LCR21) from Arabidopsis thaliana (Mouse-ear cress).